A 228-amino-acid polypeptide reads, in one-letter code: Uracil-DNA glycosylase (228 aa).

Asp-64 functions as the Proton acceptor in the catalytic mechanism.

Belongs to the uracil-DNA glycosylase (UDG) superfamily. UNG family.

The protein resides in the cytoplasm. It carries out the reaction Hydrolyzes single-stranded DNA or mismatched double-stranded DNA and polynucleotides, releasing free uracil.. In terms of biological role, excises uracil residues from the DNA which can arise as a result of misincorporation of dUMP residues by DNA polymerase or due to deamination of cytosine. The protein is Uracil-DNA glycosylase of Yersinia enterocolitica serotype O:8 / biotype 1B (strain NCTC 13174 / 8081).